The following is a 313-amino-acid chain: Ubiquitin-conjugating enzyme E2 Z (313 aa).

In terms of domain architecture, UBC core spans 58–212 (QCVLRIKRDI…IRHETIRVAV (155 aa)). The active-site Glycyl thioester intermediate is C147. Residues 283-313 (VREKHRKETVDIDSDSSSSETETDTQGSSNP) form a disordered region. The segment covering 297–313 (DSSSSETETDTQGSSNP) has biased composition (low complexity).

This sequence belongs to the ubiquitin-conjugating enzyme family.

It is found in the cytoplasm. The protein localises to the nucleus. The catalysed reaction is S-ubiquitinyl-[E1 ubiquitin-activating enzyme]-L-cysteine + [E2 ubiquitin-conjugating enzyme]-L-cysteine = [E1 ubiquitin-activating enzyme]-L-cysteine + S-ubiquitinyl-[E2 ubiquitin-conjugating enzyme]-L-cysteine.. Its pathway is protein modification; protein ubiquitination. Functionally, catalyzes the covalent attachment of ubiquitin to other proteins. May be involved in apoptosis regulation. In Xenopus tropicalis (Western clawed frog), this protein is Ubiquitin-conjugating enzyme E2 Z (ube2z).